A 359-amino-acid polypeptide reads, in one-letter code: Archaemetzincin-2 (359 aa).

His254 lines the Zn(2+) pocket. Glu255 (proton acceptor) is an active-site residue. His258, His264, Cys265, Cys270, Cys289, and Cys292 together coordinate Zn(2+).

The protein belongs to the peptidase M54 family. Zn(2+) is required as a cofactor.

Functionally, probable zinc metalloprotease. The chain is Archaemetzincin-2 (Amz2) from Rattus norvegicus (Rat).